A 418-amino-acid chain; its full sequence is uncharacterized protein (418 aa).

This is an uncharacterized protein from Escherichia coli O157:H7.